We begin with the raw amino-acid sequence, 83 residues long: Mitochondrial import inner membrane translocase subunit Tim8 B (83 aa).

Ala2 bears the N-acetylalanine mark. The Twin CX3C motif motif lies at 36–59; it reads CWDKCVEKPGNRLDSRTENCLSSC. Cystine bridges form between Cys36-Cys59 and Cys40-Cys55.

This sequence belongs to the small Tim family. As to quaternary structure, heterohexamer; possibly composed of 3 copies of TIMM8B and 3 copies of TIMM13, named soluble 70 kDa complex. Associates with the TIM22 complex, whose core is composed of TIMM22. As to expression, ubiquitous, with highest expression in heart, kidney, liver and skeletal muscle.

It localises to the mitochondrion inner membrane. Probable mitochondrial intermembrane chaperone that participates in the import and insertion of some multi-pass transmembrane proteins into the mitochondrial inner membrane. Also required for the transfer of beta-barrel precursors from the TOM complex to the sorting and assembly machinery (SAM complex) of the outer membrane. Acts as a chaperone-like protein that protects the hydrophobic precursors from aggregation and guide them through the mitochondrial intermembrane space. This Homo sapiens (Human) protein is Mitochondrial import inner membrane translocase subunit Tim8 B (TIMM8B).